The primary structure comprises 204 residues: Cytochrome c biogenesis ATP-binding export protein CcmA (204 aa).

The 202-residue stretch at Leu-2 to Leu-203 folds into the ABC transporter domain. Gly-34–Thr-41 is a binding site for ATP.

Belongs to the ABC transporter superfamily. CcmA exporter (TC 3.A.1.107) family. In terms of assembly, the complex is composed of two ATP-binding proteins (CcmA) and two transmembrane proteins (CcmB).

The protein resides in the cell inner membrane. The catalysed reaction is heme b(in) + ATP + H2O = heme b(out) + ADP + phosphate + H(+). In terms of biological role, part of the ABC transporter complex CcmAB involved in the biogenesis of c-type cytochromes; once thought to export heme, this seems not to be the case, but its exact role is uncertain. Responsible for energy coupling to the transport system. The sequence is that of Cytochrome c biogenesis ATP-binding export protein CcmA from Dechloromonas aromatica (strain RCB).